The sequence spans 457 residues: ERV-H1 provirus ancestral Env polyprotein (457 aa).

Residues 1–35 form the signal peptide; it reads MIFAGKAPSNTSTLMKFYSLILYSLLFSFPFLCHP. Asn10 and Asn47 each carry an N-linked (GlcNAc...) asparagine glycan. The CXXC signature appears at 64 to 67; sequence CWLC. N-linked (GlcNAc...) asparagine glycans are attached at residues Asn197, Asn222, Asn265, Asn283, Asn352, and Asn370. Residues 388–408 are fusion peptide; sequence VIPLIPLMFGLGLSASTIALS.

The protein belongs to the gamma type-C retroviral envelope protein family. HERV class-I H env subfamily. The surface (SU) and transmembrane (TM) proteins form a heterodimer. SU and TM are attached by noncovalent interactions or by a labile interchain disulfide bond. In terms of processing, specific enzymatic cleavages in vivo yield the mature SU and TM proteins. The CXXC motif is highly conserved across a broad range of retroviral envelope proteins. It is thought to participate in the formation of a labile disulfide bond possibly with the CX6CC motif present in the transmembrane protein.

It localises to the virion. In terms of biological role, retroviral envelope proteins mediate receptor recognition and membrane fusion during early infection. Endogenous envelope proteins may have kept, lost or modified their original function during evolution. Functionally, SU mediates receptor recognition. TM anchors the envelope heterodimer to the viral membrane through one transmembrane domain. The other hydrophobic domain, called fusion peptide, mediates fusion of the viral membrane with the target cell membrane. The polypeptide is ERV-H1 provirus ancestral Env polyprotein (Pan troglodytes (Chimpanzee)).